A 136-amino-acid chain; its full sequence is Evasin P991 (136 aa).

An N-terminal signal peptide occupies residues 1-28; that stretch reads MHSTIVYACLLALAVFVALHGTPLAALA. 7 N-linked (GlcNAc...) asparagine glycosylation sites follow: Asn41, Asn61, Asn64, Asn78, Asn92, Asn100, and Asn122. Intrachain disulfides connect Cys55/Cys77, Cys73/Cys114, Cys90/Cys119, and Cys109/Cys128.

It is found in the secreted. Salivary chemokine-binding protein which has chemokine-neutralizing activity and binds to host chemokines CCL2, CCL3, CCL3L1, CCL4, CCL4L1, CCL5, CCL6, CCL7, CCL8, CCL9, CCL11, CCL12, CCL13, CCL14, CCL16, CCL17, CCL18, CCL19, CCL22, CCL23, CCL24 and CCL27. The sequence is that of Evasin P991 from Amblyomma cajennense (Cayenne tick).